Consider the following 358-residue polypeptide: Heme A synthase (358 aa).

The next 8 helical transmembrane spans lie at 22 to 42 (IQVW…VGGA), 107 to 127 (VLGR…WAIK), 133 to 153 (VLLQ…VGWW), 172 to 192 (LAFH…LSQG), 208 to 228 (FAGW…LVAG), 269 to 289 (FVHR…AFYV), 302 to 322 (AFFI…TLLQ), and 324 to 344 (VPIS…CFSV). His-271 is a binding site for heme. Heme is bound at residue His-332.

The protein belongs to the COX15/CtaA family. Type 2 subfamily. Interacts with CtaB. Heme b is required as a cofactor.

It is found in the cell membrane. The enzyme catalyses Fe(II)-heme o + 2 A + H2O = Fe(II)-heme a + 2 AH2. It functions in the pathway porphyrin-containing compound metabolism; heme A biosynthesis; heme A from heme O: step 1/1. In terms of biological role, catalyzes the conversion of heme O to heme A by two successive hydroxylations of the methyl group at C8. The first hydroxylation forms heme I, the second hydroxylation results in an unstable dihydroxymethyl group, which spontaneously dehydrates, resulting in the formyl group of heme A. In Bartonella henselae (strain ATCC 49882 / DSM 28221 / CCUG 30454 / Houston 1) (Rochalimaea henselae), this protein is Heme A synthase.